Here is a 124-residue protein sequence, read N- to C-terminus: Single-stranded DNA-binding protein (124 aa).

It belongs to the phi29likevirus single-strand-binding protein family. Monomer.

Its function is as follows. Single-stranded DNA binding protein required for the elongation during viral DNA replication by strand displacement. Displaced viral DNA strands are transiently coated with the ssDNA-binding protein and therefore protected againt nucleases. The latter is then probably removed by the replisome that performs lagging strand synthesis or during the events that lead up to the recombination process. Has helix-destabilizing activity since it removes secondary structure from the ssDNA in replicative intermediates. This chain is Single-stranded DNA-binding protein (5), found in Bacillus subtilis (Bacteriophage PZA).